A 274-amino-acid polypeptide reads, in one-letter code: MSIFIPKARRPTFELHLRIHDVVNIPLITGVIFVKWNIEGIHSRHANDQTEAEPVLEHRVTWEYETCVSVRMIIDNDNLLKDKFLILQVLCDSHTDSGVIRLGILKINLTEYVYVGQDTRKYLLADSKINATIRIGISLKQTSGNKDFRVSKTLGKPQVFSGLTGLLTDGKELKRRDDEVYTSTGLASAWAEKMLHSIKDFNQKTTVFHMHTRNNKYDTREIVDDIFFGGTGWAEPPKIADIVDAAGDTDLISLEIRQKSWVLPSEKVLNKRLP.

Residues 3 to 141 enclose the C2 NT-type domain; it reads IFIPKARRPT…TIRIGISLKQ (139 aa).

This sequence to yeast YBL086c.

This is an uncharacterized protein from Schizosaccharomyces pombe (strain 972 / ATCC 24843) (Fission yeast).